Here is a 402-residue protein sequence, read N- to C-terminus: Pyridinium-3,5-bisthiocarboxylic acid mononucleotide nickel insertion protein (402 aa).

The protein belongs to the LarC family.

It catalyses the reaction Ni(II)-pyridinium-3,5-bisthiocarboxylate mononucleotide = pyridinium-3,5-bisthiocarboxylate mononucleotide + Ni(2+). Its function is as follows. Involved in the biosynthesis of a nickel-pincer cofactor ((SCS)Ni(II) pincer complex). Binds Ni(2+), and functions in nickel delivery to pyridinium-3,5-bisthiocarboxylic acid mononucleotide (P2TMN), to form the mature cofactor. Is thus probably required for the activation of nickel-pincer cofactor-dependent enzymes. This Thermotoga sp. (strain RQ2) protein is Pyridinium-3,5-bisthiocarboxylic acid mononucleotide nickel insertion protein.